We begin with the raw amino-acid sequence, 290 residues long: Small ribosomal subunit protein uS2 (290 aa).

It belongs to the universal ribosomal protein uS2 family. In terms of assembly, component of the small ribosomal subunit. Mature ribosomes consist of a small (40S) and a large (60S) subunit. The 40S subunit contains about 33 different proteins and 1 molecule of RNA (18S). The 60S subunit contains about 49 different proteins and 3 molecules of RNA (28S, 5.8S and 5S). Interacts with ribosomal protein S21.

It localises to the cytoplasm. Required for the assembly and/or stability of the 40S ribosomal subunit. Required for the processing of the 20S rRNA-precursor to mature 18S rRNA in a late step of the maturation of 40S ribosomal subunits. The polypeptide is Small ribosomal subunit protein uS2 (Culex quinquefasciatus (Southern house mosquito)).